The primary structure comprises 263 residues: Large ribosomal subunit protein uL10m (263 aa).

The N-terminal 29 residues, 1–29 (MPFSVEVEVFFLLVEDKLGWLPTLQPVRH), are a transit peptide targeting the mitochondrion. Positions 241–263 (QHEGDCATSTEGKPHPPDPAPDS) are disordered.

It belongs to the universal ribosomal protein uL10 family. In terms of assembly, component of the mitochondrial ribosome large subunit (39S) which comprises a 16S rRNA and about 50 distinct proteins.

It localises to the mitochondrion. This Rattus norvegicus (Rat) protein is Large ribosomal subunit protein uL10m (Mrpl10).